Reading from the N-terminus, the 173-residue chain is Shikimate kinase 2 (173 aa).

12–17 (GCGKTT) is a binding site for ATP. 2 residues coordinate Mg(2+): Thr16 and Asp32. Residues Asp34, Arg58, and Gly79 each contribute to the substrate site. The interval 112–126 (EENPQDNQRPTLTGR) is LID domain. An ATP-binding site is contributed by Arg120. Arg139 is a substrate binding site. Gln155 contacts ATP.

Belongs to the shikimate kinase family. AroL subfamily. Monomer. Requires Mg(2+) as cofactor.

It localises to the cytoplasm. It carries out the reaction shikimate + ATP = 3-phosphoshikimate + ADP + H(+). The protein operates within metabolic intermediate biosynthesis; chorismate biosynthesis; chorismate from D-erythrose 4-phosphate and phosphoenolpyruvate: step 5/7. In terms of biological role, catalyzes the specific phosphorylation of the 3-hydroxyl group of shikimic acid using ATP as a cosubstrate. This Pectobacterium carotovorum subsp. carotovorum (strain PC1) protein is Shikimate kinase 2.